A 119-amino-acid polypeptide reads, in one-letter code: Achromolysin (119 aa).

Belongs to the peptidase M4 family. Requires Ca(2+) as cofactor. It depends on Zn(2+) as a cofactor.

The protein resides in the secreted. Has staphylolytic activity. This is Achromolysin from Achromobacter lyticus.